We begin with the raw amino-acid sequence, 295 residues long: Cytidine deaminase (295 aa).

CMP/dCMP-type deaminase domains lie at 48–168 (ADDE…FGPA) and 187–295 (EETT…YLAI). 89 to 91 (NLE) contacts substrate. A Zn(2+)-binding site is contributed by histidine 102. The active-site Proton donor is glutamate 104. The Zn(2+) site is built by cysteine 129 and cysteine 132.

The protein belongs to the cytidine and deoxycytidylate deaminase family. In terms of assembly, homodimer. It depends on Zn(2+) as a cofactor.

The catalysed reaction is cytidine + H2O + H(+) = uridine + NH4(+). The enzyme catalyses 2'-deoxycytidine + H2O + H(+) = 2'-deoxyuridine + NH4(+). In terms of biological role, this enzyme scavenges exogenous and endogenous cytidine and 2'-deoxycytidine for UMP synthesis. The chain is Cytidine deaminase from Vibrio atlanticus (strain LGP32) (Vibrio splendidus (strain Mel32)).